Consider the following 478-residue polypeptide: GDP-fucose protein O-fucosyltransferase 3 (478 aa).

Residues methionine 1 to leucine 9 are Cytoplasmic-facing. Residues leucine 10 to valine 30 form a helical; Signal-anchor for type II membrane protein membrane-spanning segment. Residues glutamate 31–aspartate 478 are Lumenal-facing. 2 N-linked (GlcNAc...) asparagine glycosylation sites follow: asparagine 110 and asparagine 168. Residues cysteine 389 and cysteine 392 are joined by a disulfide bond.

Belongs to the glycosyltransferase 10 family.

The protein resides in the endoplasmic reticulum membrane. The enzyme catalyses L-threonyl-[protein] + GDP-beta-L-fucose = 3-O-(alpha-L-fucosyl)-L-threonyl-[protein] + GDP + H(+). It catalyses the reaction L-seryl-[protein] + GDP-beta-L-fucose = 3-O-(alpha-L-fucosyl)-L-seryl-[protein] + GDP + H(+). Its pathway is protein modification; protein glycosylation. Its function is as follows. Protein O-fucosyltransferase that specifically catalyzes O-fucosylation of serine or threonine residues in EMI domains of target proteins, such as MMRN1, MMRN2 and EMID1. Attaches fucose through an O-glycosidic linkage. O-fucosylation of EMI domain-containing proteins may be required for facilitating protein folding and secretion. May also show alpha-(1,3)-fucosyltransferase activity toward the innermost N-acetyl glucosamine (GlcNAc) residue in biantennary N-glycan acceptors. However, this was tested with a library of synthetic substrates and this activity is unsure in vivo. May be involved in biosynthesis of Lewis X-carrying biantennary N-glycans that regulate neuron stem cell self-renewal during brain development. The polypeptide is GDP-fucose protein O-fucosyltransferase 3 (FUT10) (Bos taurus (Bovine)).